The primary structure comprises 358 residues: Aurora kinase (358 aa).

Positions 1–49 (MENKATLARNIGEKRVSPRSKVNGTGKSWRISYSPQRMDGVSSGRNVSK) are disordered. The segment covering 20-35 (SKVNGTGKSWRISYSP) has biased composition (polar residues). Residues 100-358 (FEVGRKLGKG…PWILKNKPFW (259 aa)) form the Protein kinase domain. ATP-binding positions include 106–114 (LGKGKFGKV) and K129. D223 (proton acceptor) is an active-site residue.

It belongs to the protein kinase superfamily. Ser/Thr protein kinase family. Aurora subfamily.

It localises to the nucleus. The protein localises to the cytoplasm. Its subcellular location is the cytoskeleton. It is found in the spindle. The protein resides in the chromosome. It localises to the centromere. The protein localises to the kinetochore. It carries out the reaction L-seryl-[protein] + ATP = O-phospho-L-seryl-[protein] + ADP + H(+). It catalyses the reaction L-threonyl-[protein] + ATP = O-phospho-L-threonyl-[protein] + ADP + H(+). Functionally, component of the chromosomal passenger complex (CPC), a complex that acts as a key regulator of chromosome segregation and cytokinesis. Has a role in error-correction of aberrent kinetochore-microtubule attachments to ensure that sister kinetochores become bioriented and connect to opposite poles by promoting spindle assembly checkpoint signaling. This Candida glabrata (strain ATCC 2001 / BCRC 20586 / JCM 3761 / NBRC 0622 / NRRL Y-65 / CBS 138) (Yeast) protein is Aurora kinase (IPL1).